The following is a 176-amino-acid chain: MFHATTIVAVKKGDQVAMAGDGQVTMGQATVMKHKARKVRRLFHGKVLAGFAGSVADAFTLFEKFENKLEEYQGNLQRAAVELAKDWRMDKALRNLEALLIVADKQSMLLISGSGEVIEPDDGIAAIGSGGNYALAAARALVKNTDLQPAQLVQEAMEVASSICVYTNDQIIVEEL.

The active site involves Thr-5. Na(+)-binding residues include Ser-161, Cys-164, and Thr-167.

It belongs to the peptidase T1B family. HslV subfamily. As to quaternary structure, a double ring-shaped homohexamer of HslV is capped on each side by a ring-shaped HslU homohexamer. The assembly of the HslU/HslV complex is dependent on binding of ATP.

It is found in the cytoplasm. It catalyses the reaction ATP-dependent cleavage of peptide bonds with broad specificity.. Its activity is regulated as follows. Allosterically activated by HslU binding. Protease subunit of a proteasome-like degradation complex believed to be a general protein degrading machinery. This chain is ATP-dependent protease subunit HslV, found in Desulfitobacterium hafniense (strain DSM 10664 / DCB-2).